The primary structure comprises 417 residues: NADH-quinone oxidoreductase subunit D (417 aa).

Belongs to the complex I 49 kDa subunit family. In terms of assembly, NDH-1 is composed of 14 different subunits. Subunits NuoB, C, D, E, F, and G constitute the peripheral sector of the complex.

Its subcellular location is the cell inner membrane. The catalysed reaction is a quinone + NADH + 5 H(+)(in) = a quinol + NAD(+) + 4 H(+)(out). In terms of biological role, NDH-1 shuttles electrons from NADH, via FMN and iron-sulfur (Fe-S) centers, to quinones in the respiratory chain. The immediate electron acceptor for the enzyme in this species is believed to be ubiquinone. Couples the redox reaction to proton translocation (for every two electrons transferred, four hydrogen ions are translocated across the cytoplasmic membrane), and thus conserves the redox energy in a proton gradient. The polypeptide is NADH-quinone oxidoreductase subunit D (Acidovorax sp. (strain JS42)).